The primary structure comprises 444 residues: Aflatoxin biosynthesis regulatory protein (444 aa).

The disordered stretch occupies residues 1–26; it reads MVDHISPRASPGPIRSSQTRRARKLR. A DNA-binding region (zn(2)-C6 fungal-type) is located at residues 29–56; it reads CTSCASSKVRCTKEKPACARCIERGLAC. Positions 64-167 are disordered; the sequence is MGRNPRAPSP…QGLGGDLAGQ (104 aa). Basic residues predominate over residues 106–116; sequence TQAHTHAHSHP. Positions 120-130 are enriched in low complexity; the sequence is PQSHPQSNQPP. Polar residues predominate over residues 136–149; sequence PNGSSSVSAIFSHQ.

Interacts with its co-regulator aflS.

The protein resides in the nucleus. The protein localises to the endosome. Transcription factor involved in regulation of the aflatoxin biosynthesis gene cluster. Binds with its co-regulator aflS to AFLR1 elements (5'-TCGSWNNSCGR-3') present in the promoters of the aflatoxin cluster genes. The ratio of the expression data between aflS:aflR plays a crucial role in the regulation of aflatoxins production. A high ratio, produced at a range between 17 and 30 degrees Celsius, corresponds with the production profile of aflatoxin G1 biosynthesis. A low ratio, produced over 30 degrees Celsius, is related to aflatoxin B1 biosynthesis. This Aspergillus parasiticus (strain ATCC 56775 / NRRL 5862 / SRRC 143 / SU-1) protein is Aflatoxin biosynthesis regulatory protein.